Reading from the N-terminus, the 416-residue chain is Inhibitor of growth protein 3 (416 aa).

3 disordered regions span residues 126–165, 177–198, and 283–319; these read LDTP…PEKK, SDAS…STNN, and QTLT…SSSL. The segment covering 136–152 has biased composition (basic residues); sequence HHVHSHSSGEKRKHIPS. A compositionally biased stretch (basic and acidic residues) spans 156-165; the sequence is STTDHVPEKK. Residues 177–187 show a composition bias toward polar residues; sequence SDASKENTAGC. 3 stretches are compositionally biased toward low complexity: residues 189 to 198, 283 to 293, and 302 to 319; these read TNLSSSSTNN, QTLTSSATTDS, and NNKS…SSSL. A PHD-type zinc finger spans residues 358–407; that stretch reads PRYCICNQVSYGEMVGCDNQDCPIEWFHYGCVGLSEAPKGKWYCPQCTAA. Cys361, Cys363, Cys374, Cys379, His385, Cys388, Cys401, and Cys404 together coordinate Zn(2+).

This sequence belongs to the ING family. As to quaternary structure, interacts with H3K4me3 and to a lesser extent with H3K4me2. Component of the NuA4 histone acetyltransferase complex.

It is found in the nucleus. Component of the NuA4 histone acetyltransferase (HAT) complex which is involved in transcriptional activation of select genes principally by acetylation of nucleosomal histone H4 and H2A. This modification may both alter nucleosome - DNA interactions and promote interaction of the modified histones with other proteins which positively regulate transcription. NuA4 may also play a direct role in DNA repair when directly recruited to sites of DNA damage. The sequence is that of Inhibitor of growth protein 3 (ing3) from Xenopus laevis (African clawed frog).